The following is a 130-amino-acid chain: Cytochrome c oxidase subunit 13, mitochondrial (130 aa).

The N-terminal 31 residues, 1 to 31 (MSMMNRNIGFLSRTLKTSVPKRAGLLSFRAY), are a transit peptide targeting the mitochondrion. Topologically, residues 32-61 (SNEAKVNWLEEVQAEEEHAKRSSEFWKKVT) are mitochondrial matrix. A helical membrane pass occupies residues 62–80 (YYIGGPALILASANAYYIY). The Mitochondrial intermembrane segment spans residues 81–130 (CKHQEHAKHVEDTDPGYSFENLRFKKYPWGDGSKTLFWNDKVNHLKKDDE).

Belongs to the cytochrome c oxidase subunit 6A family. As to quaternary structure, component of the cytochrome c oxidase (complex IV, CIV), a multisubunit enzyme composed of a catalytic core of 3 subunits and several supernumerary subunits. The complex exists as a monomer or a dimer and forms supercomplexes (SCs) in the inner mitochondrial membrane with ubiquinol-cytochrome c oxidoreductase (cytochrome b-c1 complex, complex III, CIII).

The protein localises to the mitochondrion inner membrane. It functions in the pathway energy metabolism; oxidative phosphorylation. In terms of biological role, component of the cytochrome c oxidase, the last enzyme in the mitochondrial electron transport chain which drives oxidative phosphorylation. The respiratory chain contains 3 multisubunit complexes succinate dehydrogenase (complex II, CII), ubiquinol-cytochrome c oxidoreductase (cytochrome b-c1 complex, complex III, CIII) and cytochrome c oxidase (complex IV, CIV), that cooperate to transfer electrons derived from NADH and succinate to molecular oxygen, creating an electrochemical gradient over the inner membrane that drives transmembrane transport and the ATP synthase. Cytochrome c oxidase is the component of the respiratory chain that catalyzes the reduction of oxygen to water. Electrons originating from reduced cytochrome c in the intermembrane space (IMS) are transferred via the dinuclear copper A center (CU(A)) of subunit 2 and heme A of subunit 1 to the active site in subunit 1, a binuclear center (BNC) formed by heme A3 and copper B (CU(B)). The BNC reduces molecular oxygen to 2 water molecules unsing 4 electrons from cytochrome c in the IMS and 4 protons from the mitochondrial matrix. The polypeptide is Cytochrome c oxidase subunit 13, mitochondrial (cox13) (Schizosaccharomyces pombe (strain 972 / ATCC 24843) (Fission yeast)).